We begin with the raw amino-acid sequence, 186 residues long: Probable GTP-binding protein EngB (186 aa).

In terms of domain architecture, EngB-type G spans 18–186 (DKVEICFIGR…LKKLLASEFK (169 aa)). GTP is bound by residues 26–33 (GRSNVGKS), 52–56 (GRTQL), 70–73 (DLPG), 137–140 (TKID), and 166–168 (VSS). The Mg(2+) site is built by Ser33 and Thr54.

The protein belongs to the TRAFAC class TrmE-Era-EngA-EngB-Septin-like GTPase superfamily. EngB GTPase family. The cofactor is Mg(2+).

Necessary for normal cell division and for the maintenance of normal septation. The protein is Probable GTP-binding protein EngB of Mycoplasmopsis pulmonis (strain UAB CTIP) (Mycoplasma pulmonis).